The chain runs to 682 residues: MEAILKLFGEYFFKFCKMSGYDRMLRTLGGNLTEFIENLDALHSYLALSYQEMNAPSFRVEEGADGAMLLHYYSDRHGLCHIVPGIIEAVAKDFFDTDVAMSILDMNEEVERTGKKEHVVFLVVQKAHRQIRGAKASRPQGSEDSQADQEALQGTLLRMKERYLNIPVCPGEKSHSTAVRASVLFGKGPLRDTFQPVYPERLWVEEEVFCDAFPFHIVFDEALRVKQAGVNIQKYVPGILTQKFALDEYFSIIHPQVTFNISSICKFINSQFVLKTRKEMMPKARKSQPMLKLRGQMIWMESLRCMIFMCSPNVRSLQELEESKMHLSDIAPHDTTRDLILLNQQRLAEMELSCQLEKKKEELRVLSNHLAIEKKKTETLLYAMLPEHVANQLKEGRKVAAGEFETCTILFSDVVTFTNICAACEPIQIVNMLNSMYSKFDRLTSVHDVYKVETIGDAYMVVGGVPVPVESHAQRVANFALGMRISAKEVMNPVTGEPIQIRVGIHTGPVLAGVVGDKMPRYCLFGDTVNTASRMESHGLPSKVHLSPTAHRALKNKGFEIVRRGEIEVKGKGKMTTYFLIQNLNATEDEIMGRPSAPADGKEVCTPGNQVRKSPAVPRNTDHQQQVYKGDPADASNEVTLAGSPVAGRNSTDAVNNQPSPDETKTSVVASGPVLSAFCVVL.

Histidine 43 provides a ligand contact to heme. In terms of domain architecture, Guanylate cyclase spans 408–536; sequence TILFSDVVTF…DTVNTASRME (129 aa). A disordered region spans residues 592 to 667; sequence MGRPSAPADG…QPSPDETKTS (76 aa). Polar residues predominate over residues 649–667; sequence RNSTDAVNNQPSPDETKTS.

This sequence belongs to the adenylyl cyclase class-4/guanylyl cyclase family. In terms of assembly, heterodimer of an alpha and a beta chain. Heme serves as cofactor. Kidney and liver.

The protein localises to the cytoplasm. The enzyme catalyses GTP = 3',5'-cyclic GMP + diphosphate. With respect to regulation, activated by nitric oxide in the presence of magnesium or manganese ions. The polypeptide is Guanylate cyclase soluble subunit beta-2 (Gucy1b2) (Rattus norvegicus (Rat)).